The primary structure comprises 348 residues: D-alanine--D-alanine ligase (348 aa).

The ATP-grasp domain maps to 132-334 (KRVLESAGIP…YAELIEELVR (203 aa)). Residue 162–217 (EAVLSYPVFVKPANMGSSVGISKAESEEELRAAILLALTYDSRILIEQGVLAREIE) coordinates ATP. Mg(2+) is bound by residues aspartate 288, glutamate 301, and asparagine 303.

This sequence belongs to the D-alanine--D-alanine ligase family. The cofactor is Mg(2+). It depends on Mn(2+) as a cofactor.

Its subcellular location is the cytoplasm. The catalysed reaction is 2 D-alanine + ATP = D-alanyl-D-alanine + ADP + phosphate + H(+). It participates in cell wall biogenesis; peptidoglycan biosynthesis. Functionally, cell wall formation. The protein is D-alanine--D-alanine ligase of Streptococcus equi subsp. equi (strain 4047).